A 124-amino-acid polypeptide reads, in one-letter code: Small ribosomal subunit protein uS12 (124 aa).

The disordered stretch occupies residues Met-1–Gln-30. Basic residues predominate over residues Arg-9–Lys-18.

It belongs to the universal ribosomal protein uS12 family. As to quaternary structure, part of the 30S ribosomal subunit. Contacts proteins S8 and S17. May interact with IF1 in the 30S initiation complex.

Its function is as follows. With S4 and S5 plays an important role in translational accuracy. In terms of biological role, interacts with and stabilizes bases of the 16S rRNA that are involved in tRNA selection in the A site and with the mRNA backbone. Located at the interface of the 30S and 50S subunits, it traverses the body of the 30S subunit contacting proteins on the other side and probably holding the rRNA structure together. The combined cluster of proteins S8, S12 and S17 appears to hold together the shoulder and platform of the 30S subunit. The sequence is that of Small ribosomal subunit protein uS12 from Leifsonia xyli subsp. xyli (strain CTCB07).